The chain runs to 245 residues: Orotidine 5'-phosphate decarboxylase (245 aa).

Residues Asp-22, Lys-44, 71–80 (DLKFHDIPNT), Thr-131, Arg-192, Gln-201, Gly-221, and Arg-222 each bind substrate. Lys-73 acts as the Proton donor in catalysis.

It belongs to the OMP decarboxylase family. Type 1 subfamily. Homodimer.

It catalyses the reaction orotidine 5'-phosphate + H(+) = UMP + CO2. Its pathway is pyrimidine metabolism; UMP biosynthesis via de novo pathway; UMP from orotate: step 2/2. Catalyzes the decarboxylation of orotidine 5'-monophosphate (OMP) to uridine 5'-monophosphate (UMP). The chain is Orotidine 5'-phosphate decarboxylase from Shigella dysenteriae serotype 1 (strain Sd197).